The chain runs to 716 residues: Fatty acid oxidation complex subunit alpha (716 aa).

The tract at residues 1-189 (MIYQSPTIQV…KVGAVDSVVA (189 aa)) is enoyl-CoA hydratase/isomerase. Residue Asp-296 coordinates substrate. Residues 311-716 (KEVNNAAVLG…AANNGSYYQA (406 aa)) form a 3-hydroxyacyl-CoA dehydrogenase region. Residues Met-324, Asp-343, 400-402 (VVE), Lys-407, and Ser-429 contribute to the NAD(+) site. The active-site For 3-hydroxyacyl-CoA dehydrogenase activity is the His-450. An NAD(+)-binding site is contributed by Asn-453. Substrate contacts are provided by Asn-500 and Tyr-660.

The protein in the N-terminal section; belongs to the enoyl-CoA hydratase/isomerase family. This sequence in the C-terminal section; belongs to the 3-hydroxyacyl-CoA dehydrogenase family. In terms of assembly, heterotetramer of two alpha chains (FadB) and two beta chains (FadA).

The enzyme catalyses a (3S)-3-hydroxyacyl-CoA + NAD(+) = a 3-oxoacyl-CoA + NADH + H(+). The catalysed reaction is a (3S)-3-hydroxyacyl-CoA = a (2E)-enoyl-CoA + H2O. It carries out the reaction a 4-saturated-(3S)-3-hydroxyacyl-CoA = a (3E)-enoyl-CoA + H2O. It catalyses the reaction (3S)-3-hydroxybutanoyl-CoA = (3R)-3-hydroxybutanoyl-CoA. The enzyme catalyses a (3Z)-enoyl-CoA = a 4-saturated (2E)-enoyl-CoA. The catalysed reaction is a (3E)-enoyl-CoA = a 4-saturated (2E)-enoyl-CoA. Its pathway is lipid metabolism; fatty acid beta-oxidation. In terms of biological role, involved in the aerobic and anaerobic degradation of long-chain fatty acids via beta-oxidation cycle. Catalyzes the formation of 3-oxoacyl-CoA from enoyl-CoA via L-3-hydroxyacyl-CoA. It can also use D-3-hydroxyacyl-CoA and cis-3-enoyl-CoA as substrate. The polypeptide is Fatty acid oxidation complex subunit alpha (Shewanella baltica (strain OS185)).